Consider the following 59-residue polypeptide: Conotoxin Ts-03 (59 aa).

An N-terminal signal peptide occupies residues 1–19 (MRCLPVFIILLLLIPSAAS). Residues 20-47 (VAQPKTKDDVALASFYDNAKRTLQRHWA) constitute a propeptide that is removed on maturation.

The protein belongs to the conotoxin T superfamily. Contains 2 disulfide bonds that can be either 'C1-C3, C2-C4' or 'C1-C4, C2-C3', since these disulfide connectivities have been observed for conotoxins with cysteine framework V (for examples, see AC P0DQQ7 and AC P81755). In terms of tissue distribution, expressed by the venom duct.

The protein localises to the secreted. This chain is Conotoxin Ts-03, found in Conus tessulatus (Tessellate cone).